The primary structure comprises 82 residues: ATP synthase subunit c (82 aa).

2 consecutive transmembrane segments (helical) span residues 7-27 (FVAL…CIGI) and 53-73 (FLLA…AMMF).

The protein belongs to the ATPase C chain family. As to quaternary structure, F-type ATPases have 2 components, F(1) - the catalytic core - and F(0) - the membrane proton channel. F(1) has five subunits: alpha(3), beta(3), gamma(1), delta(1), epsilon(1). F(0) has three main subunits: a(1), b(2) and c(10-14). The alpha and beta chains form an alternating ring which encloses part of the gamma chain. F(1) is attached to F(0) by a central stalk formed by the gamma and epsilon chains, while a peripheral stalk is formed by the delta and b chains.

It localises to the cell inner membrane. F(1)F(0) ATP synthase produces ATP from ADP in the presence of a proton or sodium gradient. F-type ATPases consist of two structural domains, F(1) containing the extramembraneous catalytic core and F(0) containing the membrane proton channel, linked together by a central stalk and a peripheral stalk. During catalysis, ATP synthesis in the catalytic domain of F(1) is coupled via a rotary mechanism of the central stalk subunits to proton translocation. Functionally, key component of the F(0) channel; it plays a direct role in translocation across the membrane. A homomeric c-ring of between 10-14 subunits forms the central stalk rotor element with the F(1) delta and epsilon subunits. In Aromatoleum aromaticum (strain DSM 19018 / LMG 30748 / EbN1) (Azoarcus sp. (strain EbN1)), this protein is ATP synthase subunit c.